We begin with the raw amino-acid sequence, 574 residues long: MRVIRSLLLLTIAIIGSVLSQSSIDDGYTVFYSQPDNYYVKPGTFSNGVAQAIFSNEMMTTGWSFMSISSSEGLYPNDIIAAGAGYLEGYISQEMIYQNWMNMYNNEYHNVIGSDVENWIQENLQYLQTMIDSAPSNDLYWQNVETVLTQITYMQRGYNQSVIDNGVDASQSLGITEFFLMNMDGDMIDLGPALNLTNGKQVTSPATATSPKQAFKEFMRRTGHCSALIKMTDDLSDLFSGHTTWSSYYEMVRMFKVYNLKYLFNGQPPASKVTMFSGYPGTLSSIDDFYLLDTKIVVIETTNGLMNNNLYHLITSESVLSWIRVIVANRLATGGESWCQTFSLYNSGTYNNQWIIVDYNKFIKGYGALDGTLYILEQVPDYVEYGDQTAILRTGYWPSFNIPFYENIYGLTGFNETYAQFGNWFSYQASPRSMIFKRDANNIHSLTQFQAMLRYNNWQNDPFSQGNAGNQISSRFDLVTADDPNNQYLDPDAFGGIDSKVVSADMVAALLVNAQSGPSHDNETPFTWNSQWNQKYTYAGQPTTWNFDWMTMSLQSMKPASPSSDSSSDSTTFN.

The first 20 residues, 1-20 (MRVIRSLLLLTIAIIGSVLS), serve as a signal peptide directing secretion. Residues asparagine 159, asparagine 195, and asparagine 415 are each glycosylated (N-linked (GlcNAc...) asparagine).

The protein belongs to the phospholipase B-like family.

It is found in the secreted. Phospholipase that removes both fatty-acid chains from phosphatidylcholine and produces the water-soluble glycerophosphorylcholine. In addition to phosphatidylcholine deacylation, it also hydrolyzes phosphatidylinositol and phosphatidylethanolamine. In Dictyostelium discoideum (Social amoeba), this protein is Phospholipase B-like protein A (plbA).